Here is a 259-residue protein sequence, read N- to C-terminus: Putative zinc metalloprotease Rip2 (259 aa).

Helical transmembrane passes span 14-34 (PIFLGLLGLTAVGGALAWLAG) and 39-59 (PLAYAGVFVMVIAGWLVSLCL). His-60 contributes to the Zn(2+) binding site. Glu-61 is an active-site residue. Residue His-64 coordinates Zn(2+). Transmembrane regions (helical) follow at residues 97–117 (GLPMLFIALGGIGLPGAAVYV), 128–148 (TLVSLAGPTVNLALAMLLLAA), 156–176 (IHAVLWAGVAFLAFLQLTALV), and 215–235 (LVLFLAPTLNGWFFGVVYWLF).

The protein belongs to the peptidase M50B family. Zn(2+) serves as cofactor.

The protein localises to the cell membrane. The chain is Putative zinc metalloprotease Rip2 (rip2) from Mycobacterium tuberculosis (strain ATCC 35801 / TMC 107 / Erdman).